We begin with the raw amino-acid sequence, 142 residues long: Small ribosomal subunit protein bS6 (142 aa).

The segment covering 110 to 133 (NKKPSHAKEKHEKTEHTHSHHTEE) has biased composition (basic and acidic residues). The segment at 110–142 (NKKPSHAKEKHEKTEHTHSHHTEETESVGSHSK) is disordered.

This sequence belongs to the bacterial ribosomal protein bS6 family.

Binds together with bS18 to 16S ribosomal RNA. In Helicobacter pylori (strain Shi470), this protein is Small ribosomal subunit protein bS6.